The chain runs to 207 residues: NADH-quinone oxidoreductase chain 5 (207 aa).

The protein belongs to the complex I 30 kDa subunit family. In terms of assembly, NDH-1 is composed of at least 14 different subunits, Nqo1 to Nqo14. The complex has a L-shaped structure, with the hydrophobic arm (subunits Nqo7, Nqo8, Nqo10 to Nqo14) embedded in the inner membrane and the hydrophilic peripheral arm (subunits Nqo1 to Nqo6, Nqo9) protruding into the bacterial cytoplasm. The hydrophilic domain contains all the redox centers.

It localises to the cell inner membrane. It carries out the reaction a quinone + NADH + 5 H(+)(in) = a quinol + NAD(+) + 4 H(+)(out). In terms of biological role, NDH-1 shuttles electrons from NADH, via FMN and iron-sulfur (Fe-S) centers, to quinones in the respiratory chain. The immediate electron acceptor for the enzyme in this species is believed to be ubiquinone. Couples the redox reaction to proton translocation (for every two electrons transferred, four hydrogen ions are translocated across the cytoplasmic membrane), and thus conserves the redox energy in a proton gradient. The polypeptide is NADH-quinone oxidoreductase chain 5 (nqo5) (Paracoccus denitrificans).